Here is a 423-residue protein sequence, read N- to C-terminus: MERYTDLVISKIPELGFTNLLCHIYSLAGLCSNIDVSKFLTNCNGYVVEKYDKSTTAGKVSCIPIGMMLELVESGHLSRPNSSDELDQKKELTDELKTRYHSIYDVFELPTSIPLAYFFKPRLREKVSKAIDFSQMDLKIDDLSRKGIHTGENPKVVKMKIEPERGAWMSNRSIKNLVSQFAYGSEVDYIGQFDMRFLNSLAIHEKFDAFMNKHILSYILKDKIKSSTSRFVMFGFCYLSHWKCVIYDKKQCLVSFYDSGGNIPTEFHHYNNFYFYSFSDGFNTNHKHSVLDNTNCDIDVLFRFFECTFGAKIGCINVEVNQLLESECGMFISLFMILCTRTPPKSFKSLKKVYTFFKFLADKKMTLFKSILFNLHDLSLDITETDNAGLKEYKRMEKWTKKSINVICDKLTTKLNRIVNDDE.

Active-site residues include H241, D248, and C328.

Belongs to the peptidase C57 family.

Its subcellular location is the virion. Functionally, late protein responsible for processing most or all of the viral core and membrane proteins known to undergo morphogenesis-associated proteolysis. These proteolytic events are involved in the transformation of immature virions (IV) into mature virions (MV). Probably cleaves at least the OPG129/A3, OPG136/A10, OPG098/L4, and OPG144/A17 precursors preferentially at Ala-Gly-|-Ala motifs. Also seems to process Ala-Gly-|-Ser and Ala-Gly-|-Thr motifs. This chain is Core protease OPG083 (OPG083), found in Bos taurus (Bovine).